A 487-amino-acid chain; its full sequence is Glutamyl-tRNA(Gln) amidotransferase subunit A (487 aa).

Residues Lys-77 and Ser-152 each act as charge relay system in the active site. The Acyl-ester intermediate role is filled by Ser-176.

It belongs to the amidase family. GatA subfamily. In terms of assembly, heterotrimer of A, B and C subunits.

The catalysed reaction is L-glutamyl-tRNA(Gln) + L-glutamine + ATP + H2O = L-glutaminyl-tRNA(Gln) + L-glutamate + ADP + phosphate + H(+). Functionally, allows the formation of correctly charged Gln-tRNA(Gln) through the transamidation of misacylated Glu-tRNA(Gln) in organisms which lack glutaminyl-tRNA synthetase. The reaction takes place in the presence of glutamine and ATP through an activated gamma-phospho-Glu-tRNA(Gln). The chain is Glutamyl-tRNA(Gln) amidotransferase subunit A from Ligilactobacillus salivarius (strain UCC118) (Lactobacillus salivarius).